Here is a 94-residue protein sequence, read N- to C-terminus: Large ribosomal subunit protein bL25 (94 aa).

This sequence belongs to the bacterial ribosomal protein bL25 family. As to quaternary structure, part of the 50S ribosomal subunit; part of the 5S rRNA/L5/L18/L25 subcomplex. Contacts the 5S rRNA. Binds to the 5S rRNA independently of L5 and L18.

Its function is as follows. This is one of the proteins that binds to the 5S RNA in the ribosome where it forms part of the central protuberance. This chain is Large ribosomal subunit protein bL25, found in Shigella boydii serotype 18 (strain CDC 3083-94 / BS512).